The primary structure comprises 588 residues: Complement component C8 beta chain (588 aa).

The signal sequence occupies residues 1-30; the sequence is MFRVAIPRSALNLHSCLLHVTLSLVLISKA. Positions 31–46 are excised as a propeptide; the sequence is AITTAGNEDSDVREAR. In terms of domain architecture, TSP type-1 1 spans 58-113; sequence DCVISDWSAWSRCDTCQKKRYRYAKLDQPSQFGGEPCHFHDMEDEACDVPDRYTCD. Intrachain disulfides connect Cys59–Cys94, Cys70–Cys104, Cys73–Cys112, Cys118–Cys129, Cys123–Cys142, Cys136–Cys151, and Cys158–Cys196. Trp64 and Trp67 each carry a C-linked (Man) tryptophan glycan. The LDL-receptor class A domain maps to 115 to 152; the sequence is IPLCEGFLCTQTGRCIHRTLQCNGEDDCGDMSDEVGCK. Leu134, Asn137, Glu139, Asp141, Asp147, and Glu148 together coordinate Ca(2+). Residues 154–500 enclose the MACPF domain; the sequence is VPKPCRQEAE…EYLAESSSCR (347 aa). Beta stranded transmembrane passes span 248 to 255, 258 to 265, 375 to 382, and 388 to 395; these read TIVSIGFA, GIAEFGFN, TQAGLKIG, and VYVSAGIE. Cystine bridges form between Cys374-Cys399, Cys499-Cys547, Cys501-Cys517, Cys504-Cys519, and Cys521-Cys530. The 31-residue stretch at 501 to 531 folds into the EGF-like domain; it reads CAPCHNNGVAVLRGTRCDCVCPTGYTGRGCE. Residues 542 to 588 enclose the TSP type-1 2 domain; sequence DGSWSCWGAWSSCSGRKMSRSRQCNNPVPSDGGLACRGLQQESTDCF. Trp548 and Trp551 each carry a C-linked (Man) tryptophan glycan. Cysteines 554 and 587 form a disulfide.

The protein belongs to the complement C6/C7/C8/C9 family. As to quaternary structure, heterotrimer of 3 chains: alpha (C8A), beta (C8B) and gamma (C8G); the alpha and gamma chains are disulfide bonded. Component of the membrane attack complex (MAC), composed of complement C5b, C6, C7, C8A, C8B, C8G and multiple copies of the pore-forming subunit C9.

The protein resides in the secreted. It localises to the target cell membrane. Component of the membrane attack complex (MAC), a multiprotein complex activated by the complement cascade, which inserts into a target cell membrane and forms a pore, leading to target cell membrane rupture and cell lysis. The MAC is initiated by proteolytic cleavage of C5 into complement C5b in response to the classical, alternative, lectin and GZMK complement pathways. The complement pathways consist in a cascade of proteins that leads to phagocytosis and breakdown of pathogens and signaling that strengthens the adaptive immune system. C8B, together with C8A and C8G, inserts into the target membrane, but does not form pores by itself. During MAC assembly, associates with C5b, C6 and C7 to form the C5b8 intermediate complex that inserts into the target membrane and traverses the bilayer increasing membrane rigidity. This is Complement component C8 beta chain (c8b) from Paralichthys olivaceus (Bastard halibut).